The following is a 750-amino-acid chain: Coiled-coil domain-containing protein 142 (750 aa).

Positions 1 to 29 (MAQASRSGSLPPLVIVPPLRAQPGGTGEE) are disordered. The stretch at 87-110 (ALQRLRAVLLRLHREREQLLQARD) forms a coiled coil. The segment at 687–714 (LEPPLQPGTSPAQTGQLQSTLGGRGPSP) is disordered. The span at 693–707 (PGTSPAQTGQLQSTL) shows a compositional bias: polar residues.

The sequence is that of Coiled-coil domain-containing protein 142 (CCDC142) from Homo sapiens (Human).